The following is a 653-amino-acid chain: Probable potassium transport system protein Kup (653 aa).

The next 12 membrane-spanning stretches (helical) occupy residues 37-57 (ALLALGALGIVYGDIGTSPLY), 79-99 (VLSLIFWSLIIVVSVKYLLLV), 134-154 (ITLGIFGAALLYGDGIITPAI), 168-188 (AVFDPYVIPIALVILVALFLV), 196-216 (IGAVFGPVMCIWFLTLAGLGV), 243-263 (LHGFLVLGGVFLVVTGCEALY), 278-298 (WFSMVLPALMLNYLGQGALLL), 320-340 (LVALATVAGVIASQALIAGVF), 368-388 (IYLPGLNWALLVGVVALVLGF), 397-417 (AYGIAVSTAMVITTLMAYVVA), 426-446 (WVAIPVVGLFLSVELAFFGAN), and 450-470 (VADGGWFPLLMAVVVFTLMTT).

It belongs to the HAK/KUP transporter (TC 2.A.72) family.

The protein localises to the cell inner membrane. It catalyses the reaction K(+)(in) + H(+)(in) = K(+)(out) + H(+)(out). Transport of potassium into the cell. Likely operates as a K(+):H(+) symporter. The chain is Probable potassium transport system protein Kup from Myxococcus xanthus (strain DK1622).